The chain runs to 76 residues: Putative membrane protein insertion efficiency factor (76 aa).

Belongs to the UPF0161 family.

Its subcellular location is the cell inner membrane. Could be involved in insertion of integral membrane proteins into the membrane. This Paraburkholderia phytofirmans (strain DSM 17436 / LMG 22146 / PsJN) (Burkholderia phytofirmans) protein is Putative membrane protein insertion efficiency factor.